An 824-amino-acid polypeptide reads, in one-letter code: Leucine--tRNA ligase (824 aa).

Residues 42–52 (PYPSGKIHMGH) carry the 'HIGH' region motif. A 'KMSKS' region motif is present at residues 581–585 (KMSKS). K584 serves as a coordination point for ATP.

This sequence belongs to the class-I aminoacyl-tRNA synthetase family.

It is found in the cytoplasm. The catalysed reaction is tRNA(Leu) + L-leucine + ATP = L-leucyl-tRNA(Leu) + AMP + diphosphate. This is Leucine--tRNA ligase from Citrifermentans bemidjiense (strain ATCC BAA-1014 / DSM 16622 / JCM 12645 / Bem) (Geobacter bemidjiensis).